A 146-amino-acid chain; its full sequence is Large ribosomal subunit protein mL41 (146 aa).

Residues 1–16 (MKGSPISQFSKTSINA) constitute a mitochondrion transit peptide.

The protein belongs to the mitochondrion-specific ribosomal protein mL41 family. As to quaternary structure, component of the mitochondrial large ribosomal subunit (mt-LSU). Mature yeast 74S mitochondrial ribosomes consist of a small (37S) and a large (54S) subunit. The 37S small subunit contains a 15S ribosomal RNA (15S mt-rRNA) and 34 different proteins. The 54S large subunit contains a 21S rRNA (21S mt-rRNA) and 46 different proteins.

The protein resides in the mitochondrion. Component of the mitochondrial ribosome (mitoribosome), a dedicated translation machinery responsible for the synthesis of mitochondrial genome-encoded proteins, including at least some of the essential transmembrane subunits of the mitochondrial respiratory chain. The mitoribosomes are attached to the mitochondrial inner membrane and translation products are cotranslationally integrated into the membrane. The sequence is that of Large ribosomal subunit protein mL41 (MRPL27) from Saccharomyces cerevisiae (strain ATCC 204508 / S288c) (Baker's yeast).